Reading from the N-terminus, the 132-residue chain is L-ectoine synthase (132 aa).

This sequence belongs to the ectoine synthase family.

The enzyme catalyses (2S)-4-acetamido-2-aminobutanoate = L-ectoine + H2O. The protein operates within amine and polyamine biosynthesis; ectoine biosynthesis; L-ectoine from L-aspartate 4-semialdehyde: step 3/3. Its function is as follows. Catalyzes the circularization of gamma-N-acetyl-alpha,gamma-diaminobutyric acid (ADABA) to ectoine (1,4,5,6-tetrahydro-2-methyl-4-pyrimidine carboxylic acid), which is an excellent osmoprotectant. The sequence is that of L-ectoine synthase from Hahella chejuensis (strain KCTC 2396).